A 465-amino-acid polypeptide reads, in one-letter code: Argininosuccinate lyase (465 aa).

Belongs to the lyase 1 family. Argininosuccinate lyase subfamily.

The protein resides in the cytoplasm. The enzyme catalyses 2-(N(omega)-L-arginino)succinate = fumarate + L-arginine. It functions in the pathway amino-acid biosynthesis; L-arginine biosynthesis; L-arginine from L-ornithine and carbamoyl phosphate: step 3/3. The protein is Argininosuccinate lyase of Desulfatibacillum aliphaticivorans.